A 172-amino-acid polypeptide reads, in one-letter code: Disulfide bond formation protein B (172 aa).

Residues 1–13 (MIIRLAGMSVRQG) lie on the Cytoplasmic side of the membrane. Residues 14–30 (CLLGLLMCALMMGVALV) traverse the membrane as a helical segment. Residues 31-48 (LQYVYGLTPCPLCIGQRI) are Periplasmic-facing. The cysteines at positions 40 and 43 are disulfide-linked. A helical membrane pass occupies residues 49–65 (AVLLAAFVFAIGALHNP). Residues 66–72 (AGNLGRG) lie on the Cytoplasmic side of the membrane. Residues 73–90 (LYAGLAALASVLGLAVAA) form a helical membrane-spanning segment. The Periplasmic portion of the chain corresponds to 91 to 147 (RHVWLQSLPPENVPSCGPGLDYMMEVLPLWDVLSRVLAGSGECAEIHGSLLGMSIPQ). A disulfide bridge connects residues Cys-106 and Cys-133. The chain crosses the membrane as a helical span at residues 148 to 166 (WTLLGFAVLLLIPLGMLAG). Residues 167-172 (IVIRRR) are Cytoplasmic-facing.

This sequence belongs to the DsbB family.

It localises to the cell inner membrane. Required for disulfide bond formation in some periplasmic proteins. Acts by oxidizing the DsbA protein. The sequence is that of Disulfide bond formation protein B from Chromohalobacter salexigens (strain ATCC BAA-138 / DSM 3043 / CIP 106854 / NCIMB 13768 / 1H11).